We begin with the raw amino-acid sequence, 355 residues long: UDP-N-acetylglucosamine--N-acetylmuramyl-(pentapeptide) pyrophosphoryl-undecaprenol N-acetylglucosamine transferase (355 aa).

UDP-N-acetyl-alpha-D-glucosamine is bound by residues 14–16 (TGG), N126, R162, S190, I243, 262–267 (ALTVSE), and Q287.

The protein belongs to the glycosyltransferase 28 family. MurG subfamily.

Its subcellular location is the cell inner membrane. The catalysed reaction is di-trans,octa-cis-undecaprenyl diphospho-N-acetyl-alpha-D-muramoyl-L-alanyl-D-glutamyl-meso-2,6-diaminopimeloyl-D-alanyl-D-alanine + UDP-N-acetyl-alpha-D-glucosamine = di-trans,octa-cis-undecaprenyl diphospho-[N-acetyl-alpha-D-glucosaminyl-(1-&gt;4)]-N-acetyl-alpha-D-muramoyl-L-alanyl-D-glutamyl-meso-2,6-diaminopimeloyl-D-alanyl-D-alanine + UDP + H(+). Its pathway is cell wall biogenesis; peptidoglycan biosynthesis. Cell wall formation. Catalyzes the transfer of a GlcNAc subunit on undecaprenyl-pyrophosphoryl-MurNAc-pentapeptide (lipid intermediate I) to form undecaprenyl-pyrophosphoryl-MurNAc-(pentapeptide)GlcNAc (lipid intermediate II). The sequence is that of UDP-N-acetylglucosamine--N-acetylmuramyl-(pentapeptide) pyrophosphoryl-undecaprenol N-acetylglucosamine transferase from Vibrio vulnificus (strain CMCP6).